The sequence spans 1220 residues: DNA polymerase catalytic subunit (1220 aa).

2 disordered regions span residues 21 to 43 (GKRPFFRPGSGQTAETERPRPPQ) and 641 to 691 (QADA…KPGV). Residues 646–660 (SETSELAMDSQSHAF) are compositionally biased toward polar residues.

Belongs to the DNA polymerase type-B family. As to quaternary structure, forms a complex with the ssDNA-binding protein, the DNA polymerase processivity factor, and the alkaline exonuclease. Interacts with the helicase-primase complex composed of the primase, the helicase and the primase-associated factor; this interaction may coordinate leading and lagging strand DNA synthesis at the replication fork.

It localises to the host nucleus. It carries out the reaction DNA(n) + a 2'-deoxyribonucleoside 5'-triphosphate = DNA(n+1) + diphosphate. It catalyses the reaction Endonucleolytic cleavage to 5'-phosphomonoester.. Replicates viral genomic DNA. The replication complex is composed of six viral proteins: the DNA polymerase, processivity factor, primase, primase-associated factor, helicase, and ssDNA-binding protein. Additionally, the polymerase contains an intrinsic ribonuclease H (RNase H) activity that specifically degrades RNA/DNA heteroduplexes or duplex DNA substrates in the 5' to 3' direction. Therefore, it can catalyze the excision of the RNA primers that initiate the synthesis of Okazaki fragments at a replication fork during viral DNA replication. The chain is DNA polymerase catalytic subunit from Equine herpesvirus 1 (strain Ab4p) (EHV-1).